The chain runs to 1428 residues: DNA-directed RNA polymerase subunit beta' (1428 aa).

4 residues coordinate Zn(2+): C66, C68, C81, and C84. 3 residues coordinate Mg(2+): D472, D474, and D476. Zn(2+) contacts are provided by C816, C890, C897, and C900.

This sequence belongs to the RNA polymerase beta' chain family. The RNAP catalytic core consists of 2 alpha, 1 beta, 1 beta' and 1 omega subunit. When a sigma factor is associated with the core the holoenzyme is formed, which can initiate transcription. It depends on Mg(2+) as a cofactor. Zn(2+) serves as cofactor.

It carries out the reaction RNA(n) + a ribonucleoside 5'-triphosphate = RNA(n+1) + diphosphate. In terms of biological role, DNA-dependent RNA polymerase catalyzes the transcription of DNA into RNA using the four ribonucleoside triphosphates as substrates. This chain is DNA-directed RNA polymerase subunit beta', found in Phocaeicola vulgatus (strain ATCC 8482 / DSM 1447 / JCM 5826 / CCUG 4940 / NBRC 14291 / NCTC 11154) (Bacteroides vulgatus).